The chain runs to 96 residues: Conotoxin Mr15.1 (96 aa).

Positions 1 to 20 (MSTLKMMLLILLLLLPLATF) are cleaved as a signal peptide. Positions 21–57 (DSDGQAIPGGGIPSAVNSRVGRLLGGDEKSGRSLEKR) are excised as a propeptide.

It belongs to the conotoxin N superfamily. Post-translationally, contains 4 disulfide bonds. In terms of tissue distribution, expressed by the venom duct.

The protein localises to the secreted. This Conus marmoreus (Marble cone) protein is Conotoxin Mr15.1.